We begin with the raw amino-acid sequence, 72 residues long: Large ribosomal subunit protein uL29 (72 aa).

This sequence belongs to the universal ribosomal protein uL29 family.

This chain is Large ribosomal subunit protein uL29, found in Prochlorococcus marinus (strain AS9601).